Reading from the N-terminus, the 602-residue chain is Myotubularin (602 aa).

The disordered stretch occupies residues 1-32 (MASNSTPKYNSNSLENSLRRSPGDGMNHEQND). Positions 17–31 (SLRRSPGDGMNHEQN) are enriched in basic and acidic residues. Residues 28–96 (HEQNDEIPCL…GVIARIEKMG (69 aa)) enclose the GRAM domain. Positions 162-537 (GWAVYDAMTE…RHLELWVNYY (376 aa)) constitute a Myotubularin phosphatase domain. Residues Asn287, Asn312, and Ile313 each contribute to the a 1,2-diacyl-sn-glycero-3-phospho-(1D-myo-inositol-3,5-bisphosphate) site. Residues Asn287, Asn312, and Ile313 each coordinate a 1,2-diacyl-sn-glycero-3-phospho-(1D-myo-inositol-3-phosphate). Cys374 (phosphocysteine intermediate) is an active-site residue. A 1,2-diacyl-sn-glycero-3-phospho-(1D-myo-inositol-3,5-bisphosphate)-binding residues include Ser375, Asp376, Gly377, Trp378, Asp379, Arg380, Lys416, and Arg420. A 1,2-diacyl-sn-glycero-3-phospho-(1D-myo-inositol-3-phosphate)-binding residues include Ser375, Asp376, Gly377, Trp378, Asp379, and Arg380. Residue Arg420 coordinates a 1,2-diacyl-sn-glycero-3-phospho-(1D-myo-inositol-3-phosphate). The tract at residues 574 to 602 (QITNSPKMNSSTTSPSSPSQIMPQVHTPF) is disordered. The segment covering 583–592 (SSTTSPSSPS) has biased composition (low complexity).

It belongs to the protein-tyrosine phosphatase family. Non-receptor class myotubularin subfamily.

The protein localises to the cytoplasm. The protein resides in the cell membrane. It localises to the cell projection. It is found in the filopodium. Its subcellular location is the ruffle. The protein localises to the late endosome. The protein resides in the myofibril. It localises to the sarcomere. It carries out the reaction a 1,2-diacyl-sn-glycero-3-phospho-(1D-myo-inositol-3-phosphate) + H2O = a 1,2-diacyl-sn-glycero-3-phospho-(1D-myo-inositol) + phosphate. The catalysed reaction is a 1,2-diacyl-sn-glycero-3-phospho-(1D-myo-inositol-3,5-bisphosphate) + H2O = a 1,2-diacyl-sn-glycero-3-phospho-(1D-myo-inositol-5-phosphate) + phosphate. The enzyme catalyses 1,2-dioctanoyl-sn-glycero-3-phospho-(1-D-myo-inositol-3-phosphate) + H2O = 1,2-dioctanoyl-sn-glycero-3-phospho-(1D-myo-inositol) + phosphate. It catalyses the reaction 1,2-dioctanoyl-sn-glycero-3-phospho-(1D-myo-inositol-3,5-bisphosphate) + H2O = 1,2-dioctanoyl-sn-glycero-3-phospho-(1D-myo-inositol-5-phosphate) + phosphate. It carries out the reaction 1,2-dihexadecanoyl-sn-glycero-3-phospho-(1D-myo-inositol-3,5-phosphate) + H2O = 1,2-dihexadecanoyl-sn-glycero-3-phospho-(1D-myo-inositol-5-phosphate) + phosphate. Functionally, lipid phosphatase which dephosphorylates phosphatidylinositol 3-monophosphate (PI3P) and phosphatidylinositol 3,5-bisphosphate (PI(3,5)P2). The polypeptide is Myotubularin (mtm1) (Xenopus tropicalis (Western clawed frog)).